The following is a 119-amino-acid chain: Immunoglobulin heavy variable 2-5 (119 aa).

Positions 1–19 (MDTLCSTLLLLTIPSWVLS) are cleaved as a signal peptide. Pyrrolidone carboxylic acid is present on Q20. Residues 20 to 44 (QITLKESGPTLVKPTQTLTLTCTFS) form a framework-1 region. The region spanning 20-119 (QITLKESGPT…DTATYYCAHR (100 aa)) is the Ig-like domain. C41 and C116 are joined by a disulfide. A complementarity-determining-1 region spans residues 45–54 (GFSLSTSGVG). The framework-2 stretch occupies residues 55–71 (VGWIRQPPGKALEWLAL). Residues 72-78 (IYWDDDK) are complementarity-determining-2. Residues 79-116 (RYSPSLKSRLTITKDTSKNQVVLTMTNMDPVDTATYYC) are framework-3. Residues 117 to 119 (AHR) form a complementarity-determining-3 region.

As to quaternary structure, immunoglobulins are composed of two identical heavy chains and two identical light chains; disulfide-linked.

The protein resides in the secreted. It is found in the cell membrane. Functionally, v region of the variable domain of immunoglobulin heavy chains that participates in the antigen recognition. Immunoglobulins, also known as antibodies, are membrane-bound or secreted glycoproteins produced by B lymphocytes. In the recognition phase of humoral immunity, the membrane-bound immunoglobulins serve as receptors which, upon binding of a specific antigen, trigger the clonal expansion and differentiation of B lymphocytes into immunoglobulins-secreting plasma cells. Secreted immunoglobulins mediate the effector phase of humoral immunity, which results in the elimination of bound antigens. The antigen binding site is formed by the variable domain of one heavy chain, together with that of its associated light chain. Thus, each immunoglobulin has two antigen binding sites with remarkable affinity for a particular antigen. The variable domains are assembled by a process called V-(D)-J rearrangement and can then be subjected to somatic hypermutations which, after exposure to antigen and selection, allow affinity maturation for a particular antigen. This is Immunoglobulin heavy variable 2-5 from Homo sapiens (Human).